A 328-amino-acid chain; its full sequence is D-cysteine desulfhydrase (328 aa).

The residue at position 51 (Lys-51) is an N6-(pyridoxal phosphate)lysine.

The protein belongs to the ACC deaminase/D-cysteine desulfhydrase family. In terms of assembly, homodimer. Pyridoxal 5'-phosphate serves as cofactor.

The catalysed reaction is D-cysteine + H2O = hydrogen sulfide + pyruvate + NH4(+) + H(+). Functionally, catalyzes the alpha,beta-elimination reaction of D-cysteine and of several D-cysteine derivatives. It could be a defense mechanism against D-cysteine. This Escherichia coli O157:H7 protein is D-cysteine desulfhydrase.